The primary structure comprises 79 residues: Cell division protein ZapB (79 aa).

Residues 4–78 (EVFEKLEAKV…LRALLGKMEE (75 aa)) adopt a coiled-coil conformation.

This sequence belongs to the ZapB family. In terms of assembly, homodimer. The ends of the coiled-coil dimer bind to each other, forming polymers. Interacts with FtsZ.

It localises to the cytoplasm. Its function is as follows. Non-essential, abundant cell division factor that is required for proper Z-ring formation. It is recruited early to the divisome by direct interaction with FtsZ, stimulating Z-ring assembly and thereby promoting cell division earlier in the cell cycle. Its recruitment to the Z-ring requires functional FtsA or ZipA. In Pectobacterium atrosepticum (strain SCRI 1043 / ATCC BAA-672) (Erwinia carotovora subsp. atroseptica), this protein is Cell division protein ZapB.